The following is a 148-amino-acid chain: Large ribosomal subunit protein uL22c (148 aa).

Belongs to the universal ribosomal protein uL22 family. In terms of assembly, part of the 50S ribosomal subunit.

The protein localises to the plastid. The protein resides in the chloroplast. This protein binds specifically to 23S rRNA. Its function is as follows. The globular domain of the protein is located near the polypeptide exit tunnel on the outside of the subunit, while an extended beta-hairpin is found that lines the wall of the exit tunnel in the center of the 70S ribosome. The chain is Large ribosomal subunit protein uL22c (rpl22) from Triticum aestivum (Wheat).